Here is a 554-residue protein sequence, read N- to C-terminus: 3-(3-hydroxy-phenyl)propionate/3-hydroxycinnamic acid hydroxylase (554 aa).

Residues 17–46 and 285–295 each bind FAD; these read QVAIAGAGPVGLMMANYLGQMGIDVLVVEK and FRIDRVLLAGD.

This sequence belongs to the PheA/TfdB FAD monooxygenase family. FAD is required as a cofactor.

It catalyses the reaction 3-(3-hydroxyphenyl)propanoate + NADH + O2 + H(+) = 3-(2,3-dihydroxyphenyl)propanoate + NAD(+) + H2O. The catalysed reaction is (2E)-3-(3-hydroxyphenyl)prop-2-enoate + NADH + O2 + H(+) = (2E)-3-(2,3-dihydroxyphenyl)prop-2-enoate + NAD(+) + H2O. The protein operates within aromatic compound metabolism; 3-phenylpropanoate degradation. Its function is as follows. Catalyzes the insertion of one atom of molecular oxygen into position 2 of the phenyl ring of 3-(3-hydroxyphenyl)propionate (3-HPP) and hydroxycinnamic acid (3HCI). The polypeptide is 3-(3-hydroxy-phenyl)propionate/3-hydroxycinnamic acid hydroxylase (Escherichia coli O17:K52:H18 (strain UMN026 / ExPEC)).